Reading from the N-terminus, the 156-residue chain is ATP synthase subunit b (156 aa).

The chain crosses the membrane as a helical span at residues 7–29 (LLGQAISFGMFVWFCMKYVWPPI).

Belongs to the ATPase B chain family. As to quaternary structure, F-type ATPases have 2 components, F(1) - the catalytic core - and F(0) - the membrane proton channel. F(1) has five subunits: alpha(3), beta(3), gamma(1), delta(1), epsilon(1). F(0) has three main subunits: a(1), b(2) and c(10-14). The alpha and beta chains form an alternating ring which encloses part of the gamma chain. F(1) is attached to F(0) by a central stalk formed by the gamma and epsilon chains, while a peripheral stalk is formed by the delta and b chains.

The protein localises to the cell inner membrane. Its function is as follows. F(1)F(0) ATP synthase produces ATP from ADP in the presence of a proton or sodium gradient. F-type ATPases consist of two structural domains, F(1) containing the extramembraneous catalytic core and F(0) containing the membrane proton channel, linked together by a central stalk and a peripheral stalk. During catalysis, ATP synthesis in the catalytic domain of F(1) is coupled via a rotary mechanism of the central stalk subunits to proton translocation. Functionally, component of the F(0) channel, it forms part of the peripheral stalk, linking F(1) to F(0). This Vibrio cholerae serotype O1 (strain ATCC 39541 / Classical Ogawa 395 / O395) protein is ATP synthase subunit b.